We begin with the raw amino-acid sequence, 338 residues long: POU domain, class 4, transcription factor 3 (338 aa).

Positions 56-65 match the POU-IV box motif; sequence RAEALAAVDI. Residues 91 to 112 form a disordered region; that stretch reads TSPTVPISHPAALTSHPHHPVH. Positions 179 to 256 constitute a POU-specific domain; it reads DVESDPRELE…VLQAWLEEAE (78 aa). The segment at residues 274-333 is a DNA-binding region (homeobox); it reads RKRKRTSIAAPEKRSLEAYFAIQPRPSSEKIAAIAEKLDLKKNVVRVWFCNQRQKQKRMK.

This sequence belongs to the POU transcription factor family. In terms of assembly, interacts with ISL1. In terms of tissue distribution, expressed in the chochlea of the inner ear.

It localises to the nucleus. The protein resides in the cytoplasm. Acts as a transcriptional activator. Acts by binding to sequences related to the consensus octamer motif 5'-ATGCAAAT-3' in the regulatory regions of its target genes. Involved in the auditory system development, required for terminal differentiation of hair cells in the inner ear. This Rattus norvegicus (Rat) protein is POU domain, class 4, transcription factor 3.